Consider the following 282-residue polypeptide: Elongation factor Ts (282 aa).

Residues 80–83 form an involved in Mg(2+) ion dislocation from EF-Tu region; that stretch reads TDFV.

Belongs to the EF-Ts family.

The protein resides in the cytoplasm. Associates with the EF-Tu.GDP complex and induces the exchange of GDP to GTP. It remains bound to the aminoacyl-tRNA.EF-Tu.GTP complex up to the GTP hydrolysis stage on the ribosome. This is Elongation factor Ts from Chlamydia trachomatis serovar L2 (strain ATCC VR-902B / DSM 19102 / 434/Bu).